Here is a 184-residue protein sequence, read N- to C-terminus: Photosystem I assembly protein Ycf4 (184 aa).

2 helical membrane passes run 22–42 and 64–84; these read FCWA…GIPS and IVMC…WCTI.

The protein belongs to the Ycf4 family.

Its subcellular location is the plastid. It is found in the chloroplast thylakoid membrane. Its function is as follows. Seems to be required for the assembly of the photosystem I complex. This is Photosystem I assembly protein Ycf4 from Huperzia lucidula (Shining clubmoss).